The chain runs to 247 residues: L-cystine import ATP-binding protein TcyC (247 aa).

In terms of domain architecture, ABC transporter spans 2–240 (LTVKGLNKSF…PKEERTQRFL (239 aa)). 34-41 (GPSGSGKT) is a binding site for ATP.

This sequence belongs to the ABC transporter superfamily. L-cystine importer (TC 3.A.1.3.14) family. The complex is composed of two ATP-binding proteins (TcyC), two transmembrane proteins (TcyB) and a solute-binding protein (TcyA).

The protein localises to the cell membrane. Its function is as follows. Part of the ABC transporter complex TcyABC involved in L-cystine import. Responsible for energy coupling to the transport system. The sequence is that of L-cystine import ATP-binding protein TcyC (tcyC) from Bacillus subtilis (strain 168).